The sequence spans 257 residues: Phosphonates import ATP-binding protein PhnC (257 aa).

One can recognise an ABC transporter domain in the interval 2 to 246; it reads IEFRNVSKVY…KFAEIYGDVA (245 aa). An ATP-binding site is contributed by 35-42; sequence GLSGAGKS.

Belongs to the ABC transporter superfamily. Phosphonates importer (TC 3.A.1.9.1) family. As to quaternary structure, the complex is composed of two ATP-binding proteins (PhnC), two transmembrane proteins (PhnE) and a solute-binding protein (PhnD).

The protein localises to the cell membrane. The enzyme catalyses phosphonate(out) + ATP + H2O = phosphonate(in) + ADP + phosphate + H(+). Its function is as follows. Part of the ABC transporter complex PhnCDE involved in phosphonates import. Responsible for energy coupling to the transport system. In Bacillus cereus (strain ATCC 10987 / NRS 248), this protein is Phosphonates import ATP-binding protein PhnC.